We begin with the raw amino-acid sequence, 261 residues long: Cytochrome c oxidase subunit 3 (261 aa).

At 1-15 the chain is on the mitochondrial matrix side; that stretch reads MTHQTHAYHMVNPSP. The helical transmembrane segment at 16-34 threads the bilayer; it reads WPLTGALSALLMTSGLAMW. The Mitochondrial intermembrane segment spans residues 35-40; that stretch reads FHFNSP. The chain crosses the membrane as a helical span at residues 41 to 66; that stretch reads SLLLIGLVTNTLTMYQWWRDIVREGT. The Mitochondrial matrix portion of the chain corresponds to 67–72; that stretch reads FQGHHT. The chain crosses the membrane as a helical span at residues 73-105; that stretch reads PIVQKGLRYGMILFIISEVFFFAGFFWAFYHSS. The Mitochondrial intermembrane segment spans residues 106–128; the sequence is LAPTPELGGCWPPTGINPLNPLE. A helical transmembrane segment spans residues 129 to 152; that stretch reads VPLLNTSVLLASGVSITWAHHSLM. Topologically, residues 153–155 are mitochondrial matrix; the sequence is EGN. A helical membrane pass occupies residues 156–183; it reads RKNMQQALAITILLGIYFTLLQASEYYE. Over 184–190 the chain is Mitochondrial intermembrane; that stretch reads TSFTISD. Residues 191–223 form a helical membrane-spanning segment; it reads GVYGSTFFMATGFHGLHVIIGSTFLTVCLLRQF. Residues 224 to 232 lie on the Mitochondrial matrix side of the membrane; sequence NFHFTSNHH. A helical transmembrane segment spans residues 233-256; the sequence is FGFEAAAWYWHFVDVVWLFLYVSI. Over 257-261 the chain is Mitochondrial intermembrane; the sequence is YWWGS.

This sequence belongs to the cytochrome c oxidase subunit 3 family. As to quaternary structure, component of the cytochrome c oxidase (complex IV, CIV), a multisubunit enzyme composed of 14 subunits. The complex is composed of a catalytic core of 3 subunits MT-CO1, MT-CO2 and MT-CO3, encoded in the mitochondrial DNA, and 11 supernumerary subunits COX4I, COX5A, COX5B, COX6A, COX6B, COX6C, COX7A, COX7B, COX7C, COX8 and NDUFA4, which are encoded in the nuclear genome. The complex exists as a monomer or a dimer and forms supercomplexes (SCs) in the inner mitochondrial membrane with NADH-ubiquinone oxidoreductase (complex I, CI) and ubiquinol-cytochrome c oxidoreductase (cytochrome b-c1 complex, complex III, CIII), resulting in different assemblies (supercomplex SCI(1)III(2)IV(1) and megacomplex MCI(2)III(2)IV(2)).

The protein resides in the mitochondrion inner membrane. It catalyses the reaction 4 Fe(II)-[cytochrome c] + O2 + 8 H(+)(in) = 4 Fe(III)-[cytochrome c] + 2 H2O + 4 H(+)(out). Component of the cytochrome c oxidase, the last enzyme in the mitochondrial electron transport chain which drives oxidative phosphorylation. The respiratory chain contains 3 multisubunit complexes succinate dehydrogenase (complex II, CII), ubiquinol-cytochrome c oxidoreductase (cytochrome b-c1 complex, complex III, CIII) and cytochrome c oxidase (complex IV, CIV), that cooperate to transfer electrons derived from NADH and succinate to molecular oxygen, creating an electrochemical gradient over the inner membrane that drives transmembrane transport and the ATP synthase. Cytochrome c oxidase is the component of the respiratory chain that catalyzes the reduction of oxygen to water. Electrons originating from reduced cytochrome c in the intermembrane space (IMS) are transferred via the dinuclear copper A center (CU(A)) of subunit 2 and heme A of subunit 1 to the active site in subunit 1, a binuclear center (BNC) formed by heme A3 and copper B (CU(B)). The BNC reduces molecular oxygen to 2 water molecules using 4 electrons from cytochrome c in the IMS and 4 protons from the mitochondrial matrix. The chain is Cytochrome c oxidase subunit 3 (MT-CO3) from Oryctolagus cuniculus (Rabbit).